A 157-amino-acid chain; its full sequence is 1,4-dihydroxy-2-naphthoyl-CoA thioesterase 2 (157 aa).

The active site involves Glu-56. Positions Ile-154 to Lys-156 match the Microbody targeting signal motif.

Belongs to the 4-hydroxybenzoyl-CoA thioesterase family. DHNA-CoA hydrolase subfamily. Homotetramers.

It localises to the peroxisome. The protein operates within cofactor biosynthesis; phylloquinone biosynthesis. It participates in quinol/quinone metabolism; 1,4-dihydroxy-2-naphthoate biosynthesis; 1,4-dihydroxy-2-naphthoate from chorismate: step 7/7. In terms of biological role, catalyzes the hydrolysis of the thioester bond of 1,4-dihydroxy-2-naphthoyl-CoA (DHNA-CoA) in peroxisomes, a necessary step to form the naphthoquinone ring of phylloquinone (vitamin K(1)). Displayed also slight thioesterase activity towards benzoyl-CoA. Is not active on phenylacetyl-CoA, succinyl-CoA and palmitoyl-CoA thioesters. This is 1,4-dihydroxy-2-naphthoyl-CoA thioesterase 2 from Arabidopsis thaliana (Mouse-ear cress).